The primary structure comprises 355 residues: Probable dual-specificity RNA methyltransferase RlmN (355 aa).

The Proton acceptor role is filled by Glu92. The Radical SAM core domain occupies 98-330 (FHYGLSVCVT…TELGINCGVR (233 aa)). An intrachain disulfide couples Cys105 to Cys341. [4Fe-4S] cluster contacts are provided by Cys112, Cys116, and Cys119. Residues 164–165 (GE), Ser196, 219–221 (SLH), and Asn297 each bind S-adenosyl-L-methionine. Residue Cys341 is the S-methylcysteine intermediate of the active site.

It belongs to the radical SAM superfamily. RlmN family. [4Fe-4S] cluster serves as cofactor.

It localises to the cytoplasm. The catalysed reaction is adenosine(2503) in 23S rRNA + 2 reduced [2Fe-2S]-[ferredoxin] + 2 S-adenosyl-L-methionine = 2-methyladenosine(2503) in 23S rRNA + 5'-deoxyadenosine + L-methionine + 2 oxidized [2Fe-2S]-[ferredoxin] + S-adenosyl-L-homocysteine. The enzyme catalyses adenosine(37) in tRNA + 2 reduced [2Fe-2S]-[ferredoxin] + 2 S-adenosyl-L-methionine = 2-methyladenosine(37) in tRNA + 5'-deoxyadenosine + L-methionine + 2 oxidized [2Fe-2S]-[ferredoxin] + S-adenosyl-L-homocysteine. Specifically methylates position 2 of adenine 2503 in 23S rRNA and position 2 of adenine 37 in tRNAs. This is Probable dual-specificity RNA methyltransferase RlmN from Oceanobacillus iheyensis (strain DSM 14371 / CIP 107618 / JCM 11309 / KCTC 3954 / HTE831).